Consider the following 39-residue polypeptide: Gonadal protein gdl-ORF39 (39 aa).

As to expression, in bundles of maturing sperm of larval, pupal and adult males.

This chain is Gonadal protein gdl-ORF39 (gdl-ORF39), found in Drosophila melanogaster (Fruit fly).